The sequence spans 350 residues: UDP-3-O-acylglucosamine N-acyltransferase (350 aa).

H244 serves as the catalytic Proton acceptor.

The protein belongs to the transferase hexapeptide repeat family. LpxD subfamily. Homotrimer.

It catalyses the reaction a UDP-3-O-[(3R)-3-hydroxyacyl]-alpha-D-glucosamine + a (3R)-hydroxyacyl-[ACP] = a UDP-2-N,3-O-bis[(3R)-3-hydroxyacyl]-alpha-D-glucosamine + holo-[ACP] + H(+). It participates in bacterial outer membrane biogenesis; LPS lipid A biosynthesis. Catalyzes the N-acylation of UDP-3-O-acylglucosamine using 3-hydroxyacyl-ACP as the acyl donor. Is involved in the biosynthesis of lipid A, a phosphorylated glycolipid that anchors the lipopolysaccharide to the outer membrane of the cell. In Herminiimonas arsenicoxydans, this protein is UDP-3-O-acylglucosamine N-acyltransferase.